Consider the following 330-residue polypeptide: Aspartate--ammonia ligase (330 aa).

This sequence belongs to the class-II aminoacyl-tRNA synthetase family. AsnA subfamily.

The protein localises to the cytoplasm. It catalyses the reaction L-aspartate + NH4(+) + ATP = L-asparagine + AMP + diphosphate + H(+). Its pathway is amino-acid biosynthesis; L-asparagine biosynthesis; L-asparagine from L-aspartate (ammonia route): step 1/1. The protein is Aspartate--ammonia ligase of Escherichia coli O127:H6 (strain E2348/69 / EPEC).